We begin with the raw amino-acid sequence, 177 residues long: Large ribosomal subunit protein uL5 (177 aa).

The protein belongs to the universal ribosomal protein uL5 family. In terms of assembly, part of the 50S ribosomal subunit; part of the 5S rRNA/L5/L18/L25 subcomplex. Contacts the 5S rRNA and the P site tRNA. Forms a bridge to the 30S subunit in the 70S ribosome.

In terms of biological role, this is one of the proteins that bind and probably mediate the attachment of the 5S RNA into the large ribosomal subunit, where it forms part of the central protuberance. In the 70S ribosome it contacts protein S13 of the 30S subunit (bridge B1b), connecting the 2 subunits; this bridge is implicated in subunit movement. Contacts the P site tRNA; the 5S rRNA and some of its associated proteins might help stabilize positioning of ribosome-bound tRNAs. In Wolbachia pipientis wMel, this protein is Large ribosomal subunit protein uL5.